The sequence spans 316 residues: tRNA dimethylallyltransferase (316 aa).

Residue 17-24 (GPTASGKT) participates in ATP binding. 19–24 (TASGKT) provides a ligand contact to substrate. Interaction with substrate tRNA regions lie at residues 42–45 (DSAL), 166–170 (QRLSR), 247–252 (RCVGYR), and 280–287 (KRQITWLR).

It belongs to the IPP transferase family. Monomer. It depends on Mg(2+) as a cofactor.

It catalyses the reaction adenosine(37) in tRNA + dimethylallyl diphosphate = N(6)-dimethylallyladenosine(37) in tRNA + diphosphate. Functionally, catalyzes the transfer of a dimethylallyl group onto the adenine at position 37 in tRNAs that read codons beginning with uridine, leading to the formation of N6-(dimethylallyl)adenosine (i(6)A). The chain is tRNA dimethylallyltransferase from Shigella dysenteriae serotype 1 (strain Sd197).